Reading from the N-terminus, the 350-residue chain is GTPase Obg (350 aa).

An Obg domain is found at 1–159 (MKFIDEAKIT…WELALELKVL (159 aa)). The interval 17–43 (GDGSASFRREKYIPKGGPDGGDGGRGG) is disordered. Positions 33–43 (GPDGGDGGRGG) are enriched in gly residues. The 175-residue stretch at 160-334 (ADVGLLGMPN…LTYAVMDYLG (175 aa)) folds into the OBG-type G domain. GTP contacts are provided by residues 166-173 (GMPNAGKS), 191-195 (FTTLA), 213-216 (DIPG), 284-287 (NKLD), and 315-317 (SAL). Residues Ser-173 and Thr-193 each contribute to the Mg(2+) site.

This sequence belongs to the TRAFAC class OBG-HflX-like GTPase superfamily. OBG GTPase family. As to quaternary structure, monomer. Mg(2+) serves as cofactor.

The protein localises to the cytoplasm. In terms of biological role, an essential GTPase which binds GTP, GDP and possibly (p)ppGpp with moderate affinity, with high nucleotide exchange rates and a fairly low GTP hydrolysis rate. Plays a role in control of the cell cycle, stress response, ribosome biogenesis and in those bacteria that undergo differentiation, in morphogenesis control. This chain is GTPase Obg, found in Thiobacillus denitrificans (strain ATCC 25259 / T1).